Here is a 293-residue protein sequence, read N- to C-terminus: 4-hydroxy-tetrahydrodipicolinate synthase (293 aa).

T47 provides a ligand contact to pyruvate. The Proton donor/acceptor role is filled by Y135. The Schiff-base intermediate with substrate role is filled by K163. V205 is a binding site for pyruvate.

The protein belongs to the DapA family. Homotetramer; dimer of dimers.

It is found in the cytoplasm. It catalyses the reaction L-aspartate 4-semialdehyde + pyruvate = (2S,4S)-4-hydroxy-2,3,4,5-tetrahydrodipicolinate + H2O + H(+). Its pathway is amino-acid biosynthesis; L-lysine biosynthesis via DAP pathway; (S)-tetrahydrodipicolinate from L-aspartate: step 3/4. Catalyzes the condensation of (S)-aspartate-beta-semialdehyde [(S)-ASA] and pyruvate to 4-hydroxy-tetrahydrodipicolinate (HTPA). The chain is 4-hydroxy-tetrahydrodipicolinate synthase from Leptothrix cholodnii (strain ATCC 51168 / LMG 8142 / SP-6) (Leptothrix discophora (strain SP-6)).